The sequence spans 946 residues: Bifunctional glutamine synthetase adenylyltransferase/adenylyl-removing enzyme (946 aa).

The adenylyl removase stretch occupies residues 1-440 (MKPLSSPLQQ…VFNELIGDDE (440 aa)). The interval 449–946 (SEQWRELWQD…ASWQKWLVEE (498 aa)) is adenylyl transferase.

This sequence belongs to the GlnE family. It depends on Mg(2+) as a cofactor.

It catalyses the reaction [glutamine synthetase]-O(4)-(5'-adenylyl)-L-tyrosine + phosphate = [glutamine synthetase]-L-tyrosine + ADP. The enzyme catalyses [glutamine synthetase]-L-tyrosine + ATP = [glutamine synthetase]-O(4)-(5'-adenylyl)-L-tyrosine + diphosphate. Functionally, involved in the regulation of glutamine synthetase GlnA, a key enzyme in the process to assimilate ammonia. When cellular nitrogen levels are high, the C-terminal adenylyl transferase (AT) inactivates GlnA by covalent transfer of an adenylyl group from ATP to specific tyrosine residue of GlnA, thus reducing its activity. Conversely, when nitrogen levels are low, the N-terminal adenylyl removase (AR) activates GlnA by removing the adenylyl group by phosphorolysis, increasing its activity. The regulatory region of GlnE binds the signal transduction protein PII (GlnB) which indicates the nitrogen status of the cell. This chain is Bifunctional glutamine synthetase adenylyltransferase/adenylyl-removing enzyme, found in Escherichia coli O9:H4 (strain HS).